Here is a 765-residue protein sequence, read N- to C-terminus: 1,4-alpha-glucan branching enzyme GlgB (765 aa).

Asp-431 functions as the Nucleophile in the catalytic mechanism. The active-site Proton donor is Glu-484.

It belongs to the glycosyl hydrolase 13 family. GlgB subfamily. In terms of assembly, monomer.

It carries out the reaction Transfers a segment of a (1-&gt;4)-alpha-D-glucan chain to a primary hydroxy group in a similar glucan chain.. The protein operates within glycan biosynthesis; glycogen biosynthesis. Functionally, catalyzes the formation of the alpha-1,6-glucosidic linkages in glycogen by scission of a 1,4-alpha-linked oligosaccharide from growing alpha-1,4-glucan chains and the subsequent attachment of the oligosaccharide to the alpha-1,6 position. The sequence is that of 1,4-alpha-glucan branching enzyme GlgB from Synechococcus sp. (strain CC9605).